A 76-amino-acid polypeptide reads, in one-letter code: Esculentin-2SN1 (76 aa).

The signal sequence occupies residues 1–22 (MFTMKKSLLFLFFLGTISLSLC). Positions 23 to 37 (EQERGADEDDGGEEV) are excised as a propeptide. An intrachain disulfide couples cysteine 70 to cysteine 76.

Belongs to the frog skin active peptide (FSAP) family. Esculentin subfamily. As to expression, expressed by the skin glands.

The protein localises to the secreted. Antimicrobial peptide. Active against some Gram-negative and a variety of Gram-positive bacterial strains. Not active against fungi. Shows very weak hemolytic activity against human erythrocytes. The protein is Esculentin-2SN1 of Sylvirana spinulosa (Fine-spined frog).